The sequence spans 318 residues: Protein FAM228A (318 aa).

Residues 259–297 (SQESKRHEKKGLALGTGQHRPRSWAAGEGQQRRRSQPVD) form a disordered region.

The protein belongs to the FAM228 family.

In Bos taurus (Bovine), this protein is Protein FAM228A (FAM228A).